A 455-amino-acid chain; its full sequence is UPF0053 protein MT1890 (455 aa).

The 204-residue stretch at 2 to 205 (NLTDTVATIL…ARSGALDDAT (204 aa)) folds into the CNNM transmembrane domain. Helical transmembrane passes span 6-26 (TVAT…FVAA), 68-88 (LGIS…VAEL), 106-126 (LITF…GELV), and 148-168 (LFSL…NWIV). CBS domains follow at residues 224-285 (MTPR…AHTL) and 286-346 (LTTV…VRDE).

This sequence belongs to the UPF0053 family.

It is found in the cell membrane. The protein is UPF0053 protein MT1890 of Mycobacterium tuberculosis (strain CDC 1551 / Oshkosh).